We begin with the raw amino-acid sequence, 353 residues long: D-alanine--D-alanine ligase (353 aa).

The region spanning lysine 141 to isoleucine 349 is the ATP-grasp domain. Position 176–231 (glutamate 176–glutamate 231) interacts with ATP. Mg(2+) contacts are provided by aspartate 302, glutamate 316, and asparagine 318.

Belongs to the D-alanine--D-alanine ligase family. Mg(2+) serves as cofactor. Requires Mn(2+) as cofactor.

It is found in the cytoplasm. It catalyses the reaction 2 D-alanine + ATP = D-alanyl-D-alanine + ADP + phosphate + H(+). It functions in the pathway cell wall biogenesis; peptidoglycan biosynthesis. Cell wall formation. The polypeptide is D-alanine--D-alanine ligase (Prochlorococcus marinus (strain MIT 9303)).